The following is a 470-amino-acid chain: MVVGDFAIETETLVVGAGPGGYVAAIRAAQLGQKVTIVEKGNLGGVCLNVGCIPSKALISASHRYEQAKHSEEMGIKAENVTIDFAKVQEWKASVVKKLTGGVEGLLKGNKVEIVKGEAYFVDANTVRVVNGDSAQTYTFKNAIIATGSRPIELPNFKFSNRILDSTGALNLGEVPKSLVVIGGGYIGIELGTAYANFGTKVTILEGAGEILSGFEKQMAAIIKKRLKKKGVEVVTNALAKGAEEREDGVTVTYEANGETKTIDADYVLVTVGRRPNTDELGLEQIGIKMTNRGLIEVDQQCRTSVPNIFAIGDIVPGPALAHKASYEGKVAAEAIAGHPSAVDYVAIPAVVFSDPECASVGYFEQQAKDEGIDVIAAKFPFAANGRALALNDTDGFLKLVVRKEDGVIIGAQIIGPNASDMIAELGLAIEAGMTAEDIALTIHAHPTLGEIAMEAAEVALGTPIHIITK.

FAD contacts are provided by residues 39 to 47, Lys-56, and Ala-119; that span reads EKGNLGGVC. An intrachain disulfide couples Cys-47 to Cys-52. Residues 183–187, Glu-206, and 271–274 contribute to the NAD(+) site; these read GGGYI and TVGR. Residues Asp-314 and Ala-322 each coordinate FAD. Residue His-446 is the Proton acceptor of the active site.

This sequence belongs to the class-I pyridine nucleotide-disulfide oxidoreductase family. Homodimer. Identified in a complex with PdhC. FAD serves as cofactor.

The protein resides in the cytoplasm. It carries out the reaction N(6)-[(R)-dihydrolipoyl]-L-lysyl-[protein] + NAD(+) = N(6)-[(R)-lipoyl]-L-lysyl-[protein] + NADH + H(+). Lipoamide dehydrogenase is a component of the alpha-ketoacid dehydrogenase complexes. The sequence is that of Dihydrolipoyl dehydrogenase (pdhD) from Geobacillus stearothermophilus (Bacillus stearothermophilus).